The following is a 421-amino-acid chain: Synaptotagmin-1 (421 aa).

Residues 1–57 (MVSASHPEALAAPVTTVATLVPHNATEPASPGEGKEDAFSKLKQKFMNELHKIPLPP) lie on the Vesicular side of the membrane. Asparagine 24 carries an N-linked (GlcNAc...) asparagine glycan. The chain crosses the membrane as a helical span at residues 58–79 (WALIAIAIVAVLLVVTCCFCVC). S-palmitoyl cysteine attachment occurs at residues cysteine 74, cysteine 75, cysteine 77, cysteine 79, and cysteine 82. Residues 80–421 (KKCLFKKKNK…EVDAMLAVKK (342 aa)) are Cytoplasmic-facing. The disordered stretch occupies residues 112–141 (TMKDQALKDDDAETGLTDGEEKEEPKEEEK). Positions 121-133 (DDAETGLTDGEEK) are enriched in acidic residues. Threonine 128 carries the post-translational modification Phosphothreonine. A phospholipid binding region spans residues 135–381 (EPKEEEKLGK…AIGKVFVGYN (247 aa)). One can recognise a C2 1 domain in the interval 141–260 (KLGKLQYSLD…DFGHVTEEWR (120 aa)). Ca(2+) contacts are provided by leucine 171, aspartate 172, and aspartate 178. Tyrosine 229 carries the post-translational modification Phosphotyrosine. Ca(2+)-binding residues include aspartate 230, phenylalanine 231, aspartate 232, serine 235, lysine 236, and aspartate 238. Position 264 is a phosphoserine (serine 264). One can recognise a C2 2 domain in the interval 272-405 (KLGDICFSLR…NPRRPIAQWH (134 aa)). Positions 303 and 309 each coordinate Ca(2+). A phosphoserine mark is found at serine 342 and serine 344. Aspartate 363, aspartate 365, and aspartate 371 together coordinate Ca(2+).

It belongs to the synaptotagmin family. As to quaternary structure, homotetramer. Heterodimer; heterodimerizes with SYT2 in presence of calcium. Interacts with SCAMP5. Interacts with STON2. Forms a complex with SV2B, syntaxin 1 and SNAP25. Interacts with SV2A, SV2B and SV2C. Interacts with RIMS1. Interacts with PRRT2. Interacts with DNAJC5 in a phosphorylation-dependent manner. Interacts (via N-terminus) with RAB3A. Interacts with SYT12. Interacts with calmodulin. Interacts with DNM1 (via C-terminal proline-rich domain (PRD)); this interaction facilitates vesicle fission during clathrin-mediated endocytosis (CME). (Microbial infection) Interacts with C.botulinum neurotoxin type B (BoNT/B, botB). Has lower affinity for BoNT/B than Syt2; mutating its residues to match those in Syt2 increases its affinity. In terms of assembly, (Microbial infection) Interacts with C.botulinum neurotoxin type G (BoNT/G, botG). The cofactor is Ca(2+). Post-translationally, glycosylated. In terms of tissue distribution, expressed in the brain (at protein level). Predominantly expressed in rostral, phylogenetically younger brain regions, and in some endocrine tissues.

It localises to the cytoplasmic vesicle. The protein localises to the secretory vesicle membrane. Its subcellular location is the secretory vesicle. It is found in the synaptic vesicle membrane. The protein resides in the chromaffin granule membrane. It localises to the cytoplasm. Calcium sensor that participates in triggering neurotransmitter release at the synapse. May have a regulatory role in the membrane interactions during trafficking of synaptic vesicles at the active zone of the synapse. It binds acidic phospholipids with a specificity that requires the presence of both an acidic head group and a diacyl backbone. A Ca(2+)-dependent interaction between synaptotagmin and putative receptors for activated protein kinase C has also been reported. It can bind to at least three additional proteins in a Ca(2+)-independent manner; these are neurexins, syntaxin and AP2. Plays a role in dendrite formation by melanocytes. Functionally, (Microbial infection) Receptor for C.botulinum neurotoxin type B (BoNT/B, botB); interaction is improved in the presence of gangliosides. BoNT/B toxin binds to the membrane proximal vesicular domain of Syt1 (residues 32-51). Its function is as follows. (Microbial infection) Receptor for C.botulinum neurotoxin type G (BoNT/G, botG); unlike the case with BoNT/B, interaction is not improved in the presence of gangliosides. BoNT/G toxin binds to the vesicular domain of Syt1 (residues 32-53). In Rattus norvegicus (Rat), this protein is Synaptotagmin-1.